The primary structure comprises 402 residues: Bacteriochlorophyllide c C-7(1)-hydroxylase (402 aa).

Residues 104–359 (VIGMNQDIIN…IKYQDRFDMP (256 aa)) form the Radical SAM core domain. The [4Fe-4S] cluster site is built by Cys120, Cys129, and Cys132.

Belongs to the radical SAM superfamily. [4Fe-4S] cluster serves as cofactor.

It carries out the reaction a bacteriochlorophyllide c + 2 S-adenosyl-L-methionine + H2O = a bacteriochlorophyllide e + 2 5'-deoxyadenosine + 2 L-methionine + 2 H(+). The enzyme catalyses a bacteriochlorophyllide d + 2 S-adenosyl-L-methionine + H2O = a bacteriochlorophyllide f + 2 5'-deoxyadenosine + 2 L-methionine + 2 H(+). Its pathway is porphyrin-containing compound metabolism; bacteriochlorophyll biosynthesis. Its function is as follows. Involved in the biosynthesis of bacteriochlorophyll e (BChl e). Catalyzes two consecutive hydroxylation reactions of the C-7 methyl group of bacteriochlorophyllide c (BChlide c) to form a geminal diol intermediate that spontaneously dehydrates to produce the formyl group of bacteriochlorophyllide e (BChlide e). Also able to catalyze the same reaction for bacteriochlorophyllide d (BChlide d) to give rise to bacteriochlorophyllide f (BChlide f). The chain is Bacteriochlorophyllide c C-7(1)-hydroxylase from Chlorobaculum limnaeum.